The chain runs to 452 residues: Peptidoglycan DL-endopeptidase CwlO (452 aa).

A signal peptide spans methionine 1–alanine 30. A compositionally biased stretch (polar residues) spans alanine 28–glutamate 38. 2 disordered regions span residues alanine 28 to lysine 53 and alanine 258 to valine 317. 2 stretches are compositionally biased toward basic and acidic residues: residues isoleucine 39–lysine 53 and lysine 263–aspartate 275. Low complexity predominate over residues serine 276–valine 317. The NlpC/P60 domain occupies glycine 321 to valine 450. Catalysis depends on cysteine 358, which acts as the Nucleophile. Histidine 410 acts as the Proton acceptor in catalysis. Residue asparagine 422 is part of the active site.

This sequence belongs to the peptidase C40 family.

The protein localises to the secreted. In terms of biological role, shows a cell wall hydrolytic DL-endopeptidase activity. The polypeptide is Peptidoglycan DL-endopeptidase CwlO (cwlO) (Bacillus licheniformis (strain ATCC 14580 / DSM 13 / JCM 2505 / CCUG 7422 / NBRC 12200 / NCIMB 9375 / NCTC 10341 / NRRL NRS-1264 / Gibson 46)).